A 472-amino-acid polypeptide reads, in one-letter code: Estrogen receptor beta (472 aa).

The tract at residues 1–104 is modulating; the sequence is MAFCSPAMMN…NPGSKRDAHF (104 aa). 2 NR C4-type zinc fingers span residues 105 to 125 and 141 to 165; these read CAVCSDYASGYHYGVWSCEGC and CPATNQCTIDKNRRKSCQACRLRKC. Positions 105-170 form a DNA-binding region, nuclear receptor; it reads CAVCSDYASG…RLRKCYEVGM (66 aa). Residues 217–449 form the NR LBD domain; the sequence is SPEQFVLTLL…DLLLEMLNAH (233 aa).

This sequence belongs to the nuclear hormone receptor family. NR3 subfamily. Binds DNA as a homodimer. Can form a heterodimer with ER-alpha. A high expression is seen in the telencephalon, diencephalon, pituitary, testis and kidneys but little or no expression is seen in the cerebellum, pectoral muscle and adrenal gland.

Its subcellular location is the nucleus. Functionally, binds estrogens with an affinity similar to that of ER-alpha, and activates expression of reporter genes containing estrogen response elements (ERE) in an estrogen-dependent manner. The chain is Estrogen receptor beta (ESR2) from Coturnix japonica (Japanese quail).